A 339-amino-acid polypeptide reads, in one-letter code: Large ribosomal subunit protein uL29 (339 aa).

The tract at residues 1–96 (MNDLTKKSVE…FAKQRKAKIE (96 aa)) is large ribosomal subunit protein uL29. The tract at residues 97–339 (QMMAEQQAAE…KTTKKGTGKK (243 aa)) is unknown. 2 disordered regions span residues 129 to 254 (VVST…VPTK) and 311 to 339 (KENR…TGKK). Over residues 145 to 156 (APVAAKKPAAAK) the composition is skewed to low complexity. A compositionally biased stretch (basic and acidic residues) spans 157-170 (DFPKQKDVVEEKTA). Positions 171-182 (TGKPAAPSAKKA) are enriched in low complexity. Over residues 185 to 210 (AKKDVAQETKTDKDAALKALIKEKAA) the composition is skewed to basic and acidic residues. Positions 217–238 (KSKTSTPSGKTTVTVKSVTSAK) are enriched in low complexity. The span at 239 to 248 (ADIEVPKETS) shows a compositional bias: basic and acidic residues.

This sequence belongs to the universal ribosomal protein uL29 family. Forms homomultimers. Part of the ribosome; radioactive IRS binds to purified ribosomes.

Its function is as follows. Specifically binds a DNA inverted repeat sequence (IRS) found downstream of rpsB in one of the ribosomal subunit operons (for genes rpsB, tsf, and unknown gene x). Might be involved in regulation of transcription of the rpsB operon; the IRS may be a control element to attenuate transcription. This chain is Large ribosomal subunit protein uL29, found in Spiroplasma citri.